The following is a 293-amino-acid chain: Mating-type protein A-1 (293 aa).

The segment at residues 42-97 (AAKKKVNGFMGFRSYYSPLFSQLPQKERSPFMTILWQHDPFHNEWDFMCSVYSSIR) is a DNA-binding region (alpha box).

It belongs to the MATALPHA1 family.

The protein resides in the nucleus. Mating type proteins are sequence specific DNA-binding proteins that act as master switches in yeast differentiation by controlling gene expression in a cell type-specific fashion. Transcriptional activator that induces the transcription of A-specific genes like mating factor ccg-4. Required for mating as an A-cell and for blocking of heterokaryon formation (vegetative incompatibility). The protein is Mating-type protein A-1 (mtA-1) of Neurospora crassa (strain ATCC 24698 / 74-OR23-1A / CBS 708.71 / DSM 1257 / FGSC 987).